A 402-amino-acid polypeptide reads, in one-letter code: Serine/threonine-protein kinase US3 homolog (402 aa).

2 disordered regions span residues 1–21 (MSST…KVHD) and 46–88 (FPDS…SPET). Positions 102–386 (YNIVSSLPPG…AQDILMLPLF (285 aa)) constitute a Protein kinase domain. ATP is bound by residues 110–118 (PGSEGYIYV) and lysine 127. Aspartate 218 functions as the Proton acceptor in the catalytic mechanism.

This sequence belongs to the protein kinase superfamily. Ser/Thr protein kinase family. In terms of processing, phosphorylated by UL13 homolog; this phosphorylation regulates subsequent phosphorylation of UL31 and UL34 homologs by US3. Autophosphorylated.

It localises to the host cytoplasm. It is found in the host nucleus. The enzyme catalyses L-seryl-[protein] + ATP = O-phospho-L-seryl-[protein] + ADP + H(+). It catalyses the reaction L-threonyl-[protein] + ATP = O-phospho-L-threonyl-[protein] + ADP + H(+). Functionally, multifunctional serine/threonine kinase that plays a role in several processes including egress of virus particles from the nucleus, modulation of the actin cytoskeleton and inhibition of apoptosis. Phosphorylates UL31 and UL34 homologs, two critical regulators of capsid budding from nucleus to endoplasmic reticulum, thereby facilitating virion egress. Modulates and redistributes host components of the nuclear envelope, including LMNA, emerin/EMD and the nuclear matrix protein MATR3. Phosphorylates envelope glycoprotein B (gB), probably to direct it to the cell surface. Promotes virus intracellular spread by restructuring host cell cytoskeleton. Blocks host apoptosis to extend cell survival and allow efficient viral replication. Promotes viral gene expression by phosphorylating host HDAC2 to reduce viral genome silencing. This Gallid herpesvirus 2 (strain GA) (GaHV-2) protein is Serine/threonine-protein kinase US3 homolog (US1206).